A 105-amino-acid chain; its full sequence is Ribonuclease P protein component 4 (105 aa).

Zn(2+) contacts are provided by cysteine 63, cysteine 66, cysteine 89, and cysteine 92.

This sequence belongs to the eukaryotic/archaeal RNase P protein component 4 family. Consists of a catalytic RNA component and at least 4-5 protein subunits. Zn(2+) serves as cofactor.

It localises to the cytoplasm. It carries out the reaction Endonucleolytic cleavage of RNA, removing 5'-extranucleotides from tRNA precursor.. Its function is as follows. Part of ribonuclease P, a protein complex that generates mature tRNA molecules by cleaving their 5'-ends. The protein is Ribonuclease P protein component 4 of Methanoculleus marisnigri (strain ATCC 35101 / DSM 1498 / JR1).